A 369-amino-acid chain; its full sequence is Peptide chain release factor 2 (369 aa).

Q250 is subject to N5-methylglutamine.

This sequence belongs to the prokaryotic/mitochondrial release factor family. Methylated by PrmC. Methylation increases the termination efficiency of RF2.

Its subcellular location is the cytoplasm. In terms of biological role, peptide chain release factor 2 directs the termination of translation in response to the peptide chain termination codons UGA and UAA. In Rickettsia prowazekii (strain Madrid E), this protein is Peptide chain release factor 2 (prfB).